Consider the following 1343-residue polypeptide: DNA-directed RNA polymerase subunit beta (1343 aa).

Belongs to the RNA polymerase beta chain family. As to quaternary structure, the RNAP catalytic core consists of 2 alpha, 1 beta, 1 beta' and 1 omega subunit. When a sigma factor is associated with the core the holoenzyme is formed, which can initiate transcription.

It catalyses the reaction RNA(n) + a ribonucleoside 5'-triphosphate = RNA(n+1) + diphosphate. Functionally, DNA-dependent RNA polymerase catalyzes the transcription of DNA into RNA using the four ribonucleoside triphosphates as substrates. The polypeptide is DNA-directed RNA polymerase subunit beta (Shewanella frigidimarina (strain NCIMB 400)).